The primary structure comprises 1155 residues: RHO1 GDP-GTP exchange protein 1 (1155 aa).

N-acetylmethionine is present on methionine 1. Polar residues predominate over residues 100-143 (NSSPQSFTGDQISPTNKKISINDSTRQDKGNSCTTTSSPSQKRS). Residues 100 to 249 (NSSPQSFTGD…HSRSKSSPVS (150 aa)) form a disordered region. Phosphoserine occurs at positions 154 and 155. Over residues 155–167 (SPSLLSFSKNSGS) the composition is skewed to low complexity. A Phosphothreonine modification is found at threonine 180. Residues 190 to 227 (LHSSFNGKHSSSSTSSLFALESLKTQNRRSSNSSNHSS) are compositionally biased toward low complexity. Basic residues predominate over residues 228-243 (QYRRHTNQHQRHHSRS). Serine 433 bears the Phosphoserine mark. The DH domain maps to 464-651 (KRQEAIYELF…KDLMKRIDRA (188 aa)). Residues 842-1137 (TNRVNDVLIC…RMLKSYAKKI (296 aa)) form the CNH domain.

Functionally, stimulates the exchange of RHO1 GDP-bound form into GTP-bound form. This is RHO1 GDP-GTP exchange protein 1 (ROM1) from Saccharomyces cerevisiae (strain ATCC 204508 / S288c) (Baker's yeast).